The sequence spans 996 residues: UPF0182 protein CE0802 (996 aa).

7 helical membrane passes run 19-39 (VTWIIGIIALLVLVTPLTVGF), 63-83 (IILFIVFALLAGFVTWLAGYF), 115-135 (ILIIVPIFVGLLGGLVGQRSW), 176-196 (STLLVVAFIIALVGHYLLGGI), 212-234 (GARAQLAVTAGLWMLVRVATYWL), 262-282 (KIILMVISIIVAVAFFSAIFL), and 290-310 (LAVVLLVLSSVVVGAVWPLML). Positions 920–950 (VPDVNATEDADATTDGEDETPAAPAAPAGSE) are disordered. Acidic residues predominate over residues 925 to 939 (ATEDADATTDGEDET). Low complexity predominate over residues 940-950 (PAAPAAPAGSE).

This sequence belongs to the UPF0182 family.

It localises to the cell membrane. This is UPF0182 protein CE0802 from Corynebacterium efficiens (strain DSM 44549 / YS-314 / AJ 12310 / JCM 11189 / NBRC 100395).